We begin with the raw amino-acid sequence, 522 residues long: Ribonuclease Y (522 aa).

The helical transmembrane segment at 2–22 threads the bilayer; the sequence is WVEILVGSSAAIISGAAGYLL. Residues 212–278 enclose the KH domain; sequence LINTVSIPSE…TKVIELLVED (67 aa). Positions 338 to 431 constitute an HD domain; it reads ALGHSLEVAH…VCAADTLSAA (94 aa).

This sequence belongs to the RNase Y family.

It is found in the cell membrane. Endoribonuclease that initiates mRNA decay. The protein is Ribonuclease Y of Nitratiruptor sp. (strain SB155-2).